Consider the following 125-residue polypeptide: Ribosome-binding factor A (125 aa).

This sequence belongs to the RbfA family. Monomer. Binds 30S ribosomal subunits, but not 50S ribosomal subunits or 70S ribosomes.

The protein localises to the cytoplasm. In terms of biological role, one of several proteins that assist in the late maturation steps of the functional core of the 30S ribosomal subunit. Associates with free 30S ribosomal subunits (but not with 30S subunits that are part of 70S ribosomes or polysomes). Required for efficient processing of 16S rRNA. May interact with the 5'-terminal helix region of 16S rRNA. This chain is Ribosome-binding factor A, found in Desulfitobacterium hafniense (strain DSM 10664 / DCB-2).